Consider the following 59-residue polypeptide: MAVQQNKKSPSKRGMHRSHDFLTAAPLAVEPSTGEVHLRHHISPNGYYRGKKVVKTKND.

Positions 1–23 are disordered; that stretch reads MAVQQNKKSPSKRGMHRSHDFLT.

It belongs to the bacterial ribosomal protein bL32 family.

This chain is Large ribosomal subunit protein bL32, found in Burkholderia multivorans (strain ATCC 17616 / 249).